The primary structure comprises 235 residues: Pyridoxine 5'-phosphate synthase (235 aa).

Position 6 (Asn6) interacts with 3-amino-2-oxopropyl phosphate. 8-9 (DH) is a binding site for 1-deoxy-D-xylulose 5-phosphate. Arg17 is a binding site for 3-amino-2-oxopropyl phosphate. Catalysis depends on His42, which acts as the Proton acceptor. Positions 44 and 49 each coordinate 1-deoxy-D-xylulose 5-phosphate. Catalysis depends on Glu69, which acts as the Proton acceptor. Thr99 is a binding site for 1-deoxy-D-xylulose 5-phosphate. His188 acts as the Proton donor in catalysis. 3-amino-2-oxopropyl phosphate contacts are provided by residues Gly189 and 210–211 (GH).

It belongs to the PNP synthase family. In terms of assembly, homooctamer; tetramer of dimers.

The protein localises to the cytoplasm. It catalyses the reaction 3-amino-2-oxopropyl phosphate + 1-deoxy-D-xylulose 5-phosphate = pyridoxine 5'-phosphate + phosphate + 2 H2O + H(+). The protein operates within cofactor biosynthesis; pyridoxine 5'-phosphate biosynthesis; pyridoxine 5'-phosphate from D-erythrose 4-phosphate: step 5/5. In terms of biological role, catalyzes the complicated ring closure reaction between the two acyclic compounds 1-deoxy-D-xylulose-5-phosphate (DXP) and 3-amino-2-oxopropyl phosphate (1-amino-acetone-3-phosphate or AAP) to form pyridoxine 5'-phosphate (PNP) and inorganic phosphate. This Wolbachia sp. subsp. Drosophila simulans (strain wRi) protein is Pyridoxine 5'-phosphate synthase.